The following is a 64-amino-acid chain: Large ribosomal subunit protein uL30 (64 aa).

The protein belongs to the universal ribosomal protein uL30 family. In terms of assembly, part of the 50S ribosomal subunit.

This chain is Large ribosomal subunit protein uL30, found in Methylorubrum extorquens (strain CM4 / NCIMB 13688) (Methylobacterium extorquens).